A 472-amino-acid chain; its full sequence is Lactate utilization protein B (472 aa).

4Fe-4S ferredoxin-type domains are found at residues 304–334 (GTEF…GHSY) and 353–382 (YDDY…LHEL). [4Fe-4S] cluster-binding residues include C313, C316, C319, C323, C366, C369, and C373.

The protein belongs to the LutB/YkgF family.

In terms of biological role, is involved in L-lactate degradation and allows cells to grow with lactate as the sole carbon source. Has probably a role as an electron transporter during oxidation of L-lactate. This is Lactate utilization protein B from Anoxybacillus flavithermus (strain DSM 21510 / WK1).